The sequence spans 407 residues: Serine/threonine-protein kinase GRIK2 (407 aa).

Residues Ser-21–Ser-64 are disordered. The segment covering Pro-31–Asp-40 has biased composition (basic and acidic residues). One can recognise a Protein kinase domain in the interval Tyr-107 to Val-370. Residues Ile-113–Val-121 and Lys-136 each bind ATP. At Thr-153 the chain carries Phosphothreonine; by autocatalysis. Asp-238 functions as the Proton acceptor in the catalytic mechanism. A Phosphoserine; by KIN10 modification is found at Ser-260.

This sequence belongs to the protein kinase superfamily. Ser/Thr protein kinase family. As to quaternary structure, associates with the SNF1-related protein kinase (SnRK) complex. Interacts with AL1, a geminivirus (TGMV) protein essential for viral replication. In terms of tissue distribution, expressed in shoot apical meristem, leaf primordium and emerging petiole (at protein level).

The catalysed reaction is L-seryl-[protein] + ATP = O-phospho-L-seryl-[protein] + ADP + H(+). It catalyses the reaction L-threonyl-[protein] + ATP = O-phospho-L-threonyl-[protein] + ADP + H(+). Activated when autophosphorylated at Thr-153 and inactivated when phosphorylated at Ser-260 by SnRK1.1/KIN10. Activates SnRK1.1/KIN10 and SnRK1.2/KIN11 by phosphorylation of their activation-loop 'Thr-198' and 'Thr-176', respectively. Required for the regulation by SnRK1 kinases of the transcription of a large set of genes, the modification the activity of metabolic enzymes, and the control of various nutrient-responsive cellular developmental processes. The protein is Serine/threonine-protein kinase GRIK2 (GRIK2) of Arabidopsis thaliana (Mouse-ear cress).